The sequence spans 528 residues: Dihydromonacolin L monooxygenase LovA (528 aa).

The Cytoplasmic segment spans residues 1-23; the sequence is MTVDALTQPHHLLSLAWNDTQQH. Residues 24–44 form a helical; Signal-anchor for type II membrane protein membrane-spanning segment; it reads GSWFAPLVTTSAGLLCLLLYL. Over 45–528 the chain is Lumenal; the sequence is CSSGRRSDLP…DEDIRLPGSL (484 aa). Cys465 lines the heme pocket.

Belongs to the cytochrome P450 family. Heme is required as a cofactor.

The protein resides in the membrane. It is found in the endoplasmic reticulum membrane. The catalysed reaction is dihydromonacolin L carboxylate + reduced [NADPH--hemoprotein reductase] + O2 = monacolin L carboxylate + oxidized [NADPH--hemoprotein reductase] + 2 H2O + H(+). It catalyses the reaction monacolin L carboxylate + reduced [NADPH--hemoprotein reductase] + O2 = monacolin J carboxylate + oxidized [NADPH--hemoprotein reductase] + H2O + H(+). It participates in polyketide biosynthesis; lovastatin biosynthesis. In terms of biological role, dihydromonacolin L monooxygenase; part of the gene cluster that mediates the biosynthesis of lovastatin (also known as mevinolin, mevacor or monacolin K), a hypolipidemic inhibitor of (3S)-hydroxymethylglutaryl-coenzyme A (HMG-CoA) reductase (HMGR). The first step in the biosynthesis of lovastatin is the production of dihydromonacolin L acid by the lovastatin nonaketide synthase lovB and the trans-acting enoyl reductase lovC via condensation of one acetyl-CoA unit and 8 malonyl-CoA units. Dihydromonacolin L acid is released from lovB by the thioesterase lovG. Next, dihydromonacolin L acid is oxidized by the dihydromonacolin L monooxygenase lovA twice to form monacolin J acid. The 2-methylbutyrate moiety of lovastatin is synthesized by the lovastatin diketide synthase lovF via condensation of one acetyl-CoA unit and one malonyl-CoA unit. Finally, the covalent attachment of this moiety to monacolin J acid is catalyzed by the transesterase lovD to yield lovastatin. LovD has broad substrate specificity and can also convert monacolin J to simvastatin using alpha-dimethylbutanoyl-S-methyl-3-mercaptopropionate (DMB-S-MMP) as the thioester acyl donor, and can also catalyze the reverse reaction and function as hydrolase in vitro. LovD has much higher activity with LovF-bound 2-methylbutanoate than with free diketide substrates. The protein is Dihydromonacolin L monooxygenase LovA of Aspergillus terreus.